A 485-amino-acid chain; its full sequence is Adenosylhomocysteinase (485 aa).

Substrate contacts are provided by threonine 64, aspartate 139, and glutamate 205. 206–208 contributes to the NAD(+) binding site; sequence TTT. Substrate-binding residues include lysine 235 and aspartate 239. NAD(+) is bound by residues asparagine 240, 269–274, glutamate 292, asparagine 327, 348–350, and asparagine 397; these read GYGDVG and IGH.

This sequence belongs to the adenosylhomocysteinase family. NAD(+) is required as a cofactor.

It catalyses the reaction S-adenosyl-L-homocysteine + H2O = L-homocysteine + adenosine. The protein operates within amino-acid biosynthesis; L-homocysteine biosynthesis; L-homocysteine from S-adenosyl-L-homocysteine: step 1/1. Adenosylhomocysteine is a competitive inhibitor of S-adenosyl-L-methionine-dependent methyl transferase reactions; therefore adenosylhomocysteinase may play a key role in the control of methylations via regulation of the intracellular concentration of adenosylhomocysteine. The protein is Adenosylhomocysteinase (SAHH) of Medicago sativa (Alfalfa).